A 208-amino-acid chain; its full sequence is Small ribosomal subunit protein uS4 (208 aa).

In terms of domain architecture, S4 RNA-binding spans 98-161 (RRLDNVVYRM…KSNPQVVRAM (64 aa)).

It belongs to the universal ribosomal protein uS4 family. Part of the 30S ribosomal subunit. Contacts protein S5. The interaction surface between S4 and S5 is involved in control of translational fidelity.

Its function is as follows. One of the primary rRNA binding proteins, it binds directly to 16S rRNA where it nucleates assembly of the body of the 30S subunit. Functionally, with S5 and S12 plays an important role in translational accuracy. The polypeptide is Small ribosomal subunit protein uS4 (Helicobacter acinonychis (strain Sheeba)).